A 455-amino-acid chain; its full sequence is MTTSRTLRLLVVSALATLSGLGTPVAHAVSPPPIDERWLPESALPAPPRPTVQREVCTEVTAESGRAFGRAERSAQLADLDQVWRLTRGAGQRVAVIDTGVARHRRLPKVVAGGDYVFTGDGTADCDAHGTLVAGIIAAAPDAQSDNFSGVAPDVTLISIRQSSSKFAPVGDPSSTGVGDVDTMAKAVRTAADLGASVINISSIACVPAAAAPDDRALGAALAYAVDVKNAVIVAAAGNTGGAAQCPPQAPGVTRDSVTVAVSPAWYDDYVLTVGSVNAQGEPSAFTLAGPWVDVAATGEAVTSLSPFGDGTVNRLGGQHGSIPISGTSYAAPVVSGLAALIRARFPTLTARQVMQRIESTAHHPPAGWDPLVGNGTVDALAAVSSDSIPQAGTATSDPAPVAVPVPRRSTPGPSDRRALHTAFAGAAICLLALMATLATASRRLRPGRNGIAGD.

The N-terminal stretch at 1 to 25 (MTTSRTLRLLVVSALATLSGLGTPV) is a signal peptide. The Peptidase S8 domain maps to 74–384 (SAQLADLDQV…NGTVDALAAV (311 aa)). Residues Asp98, His129, and Ser329 each act as charge relay system in the active site. The interval 389-417 (IPQAGTATSDPAPVAVPVPRRSTPGPSDR) is disordered. Residues 394–412 (TATSDPAPVAVPVPRRSTP) are compositionally biased toward low complexity. Residues 432 to 452 (LALMATLATASRRLRPGRNGI) form a helical membrane-spanning segment.

This sequence belongs to the peptidase S8 family.

Its subcellular location is the cell membrane. The protein is Mycosin-4 of Mycobacterium tuberculosis (strain ATCC 25618 / H37Rv).